The sequence spans 1281 residues: Protein ETHYLENE-INSENSITIVE 2 (1281 aa).

Topologically, residues 1–21 (MDGQQLRSSESPASGGGGVTG) are cytoplasmic. Residues 22 to 42 (GGAPHLFHALGPALLISIGYI) form a helical membrane-spanning segment. Topologically, residues 43 to 61 (DLGKWVAAVEAGSRFGLDL) are extracellular. A helical membrane pass occupies residues 62-82 (VLLALLFNFMAILCQYLAACI). Residues 83 to 112 (GTVTGRSLAEICHQEYSRPTCIFLGVQAGL) are Cytoplasmic-facing. Residues 113-133 (SLLTSELTMIFGIALGFNLLF) form a helical membrane-spanning segment. At 134–137 (EYDD) the chain is on the extracellular side. The helical transmembrane segment at 138–158 (LITGICFATVVPNLLPYAISH) threads the bilayer. The Cytoplasmic portion of the chain corresponds to 159–163 (LGKKM). A helical transmembrane segment spans residues 164-184 (VGTLNACIAGFALLCYVLGLL). Over 185-208 (VSQPQIPLTTNVIFPKLSGESAYS) the chain is Extracellular. Residues 209-229 (LMALLGANVMAHNFYIHSSVV) form a helical membrane-spanning segment. Topologically, residues 230-238 (QGQKRSAFA) are cytoplasmic. Residues 239-259 (VGALFHDHLFSVLFIFTGIFL) traverse the membrane as a helical segment. Over 260 to 297 (VNHVLMNSAAADSTNTLLLTFQDVVELMNQIFVNPMAP) the chain is Extracellular. Residues 298-318 (TIFLVVLLFSSHIISLTSAIG) traverse the membrane as a helical segment. Topologically, residues 319 to 325 (SQVISQH) are cytoplasmic. Residues 326–346 (LFGINLPLSGHHLILKAFAIV) traverse the membrane as a helical segment. Topologically, residues 347-362 (PALYCAKVAGAEGIYQ) are extracellular. The helical transmembrane segment at 363-383 (LLIICQIIQAMLLPSSVVPLF) threads the bilayer. Topologically, residues 384 to 400 (RVASSRLIMGAHRVSLH) are cytoplasmic. A helical membrane pass occupies residues 401–421 (LEILTFLAFLLMLFSNIIFMA). At 422–447 (EMLFGDSGWLNTLKGNTGSPVVFPST) the chain is on the extracellular side. The helical transmembrane segment at 448-468 (VLITVACVSVAFSLYMAVTPL) threads the bilayer. Residues 469–1281 (KSGSHEAELQ…KRRLSSKGQQ (813 aa)) are Cytoplasmic-facing. Disordered regions lie at residues 540 to 565 (IESD…SPSF) and 593 to 665 (ESTV…NGSG). Residues 548–557 (HSTAHTSTAP) show a composition bias toward polar residues. Over residues 599–610 (VDSKSTGERDIE) the composition is skewed to basic and acidic residues.

This sequence belongs to the NRAMP (TC 2.A.55) family. In terms of tissue distribution, expressed in roots, leaf sheaths, leaf blades, flowers, developing seeds, germinating seeds and young seedlings. Expressed in adventitious roots, vascular tissues of the seminal roots, lateral roots, the connecting region between vascular tissues and lateral roots, mature leaf, mature stem, tips of adventitious roots derived from the node, shoot apex, young panicle, anthers, pistil, stigma, ovary, seed coat and fruit coat pericarp.

It localises to the membrane. Its function is as follows. Central factor in ethylene signaling pathways that control development, senescence and grain size. Acts as a positive component of the ethylene-signaling pathway. The polypeptide is Protein ETHYLENE-INSENSITIVE 2 (Oryza sativa subsp. japonica (Rice)).